The chain runs to 233 residues: Type II methyltransferase M.MunI (233 aa).

Belongs to the MT-A70-like family.

It carries out the reaction a 2'-deoxyadenosine in DNA + S-adenosyl-L-methionine = an N(6)-methyl-2'-deoxyadenosine in DNA + S-adenosyl-L-homocysteine + H(+). Functionally, a methylase that recognizes the double-stranded sequence 5'-CAATTG-3', methylates A-3 on both strands, and protects the DNA from cleavage by the MunI endonuclease. The polypeptide is Type II methyltransferase M.MunI (Mycoplasma sp).